The following is a 332-amino-acid chain: 30 kDa heat shock protein (332 aa).

The Extracellular portion of the chain corresponds to 1 to 34 (MNDTLSSFLNRNEALGLNPPHGLDMHITKRGSDW). A helical membrane pass occupies residues 35-55 (LWAVFAVFGFILLCYVVMFFI). Topologically, residues 56-65 (AENKGSRLTR) are cytoplasmic. A helical transmembrane segment spans residues 66-86 (YALAPAFLITFFEFFAFFTYA). The Extracellular segment spans residues 87-121 (SDLGWTGVQAEFNHVKVSKSITGEVPGIRQIFYSK). The chain crosses the membrane as a helical span at residues 122 to 142 (YIAWFLSWPCLLFLIELAAST). Topologically, residues 143-157 (TGENDDISALDMVHS) are cytoplasmic. The chain crosses the membrane as a helical span at residues 158-178 (LLIQIVGTLFWVVSLLVGSLI). Over 179–181 (KST) the chain is Extracellular. A helical transmembrane segment spans residues 182–202 (YKWGYYTIGAVAMLVTQGVIC). At 203–215 (QRQFFNLKTRGFN) the chain is on the cytoplasmic side. The chain crosses the membrane as a helical span at residues 216 to 236 (ALMLCTCMVIVWLYFICWGLS). Topologically, residues 237–248 (DGGNRIQPDGEA) are extracellular. A helical transmembrane segment spans residues 249–269 (IFYGVLDLCVFAIYPCYLLIA). Over 270-332 (VSRDGKLPRL…EAEQAVEDTA (63 aa)) the chain is Cytoplasmic. The segment at 290 to 332 (ATDDVEDAAPETKEAVPESPRASGETAIHEPEPEAEQAVEDTA) is disordered. Phosphoserine is present on S308. A compositionally biased stretch (acidic residues) spans 322–332 (PEAEQAVEDTA). T331 is subject to Phosphothreonine.

It belongs to the archaeal/bacterial/fungal opsin family.

It localises to the membrane. In terms of biological role, probably cooperates with other heat shock proteins in the translocation of polypeptides through membranes. It may counteract the altering effect of heat shock on the plasma membrane. This is 30 kDa heat shock protein (HSP30) from Saccharomyces cerevisiae (strain ATCC 204508 / S288c) (Baker's yeast).